The sequence spans 262 residues: Acyl-[acyl-carrier-protein]--UDP-N-acetylglucosamine O-acyltransferase (262 aa).

Belongs to the transferase hexapeptide repeat family. LpxA subfamily. As to quaternary structure, homotrimer.

It localises to the cytoplasm. The catalysed reaction is a (3R)-hydroxyacyl-[ACP] + UDP-N-acetyl-alpha-D-glucosamine = a UDP-3-O-[(3R)-3-hydroxyacyl]-N-acetyl-alpha-D-glucosamine + holo-[ACP]. Its pathway is glycolipid biosynthesis; lipid IV(A) biosynthesis; lipid IV(A) from (3R)-3-hydroxytetradecanoyl-[acyl-carrier-protein] and UDP-N-acetyl-alpha-D-glucosamine: step 1/6. Its function is as follows. Involved in the biosynthesis of lipid A, a phosphorylated glycolipid that anchors the lipopolysaccharide to the outer membrane of the cell. The protein is Acyl-[acyl-carrier-protein]--UDP-N-acetylglucosamine O-acyltransferase of Vibrio vulnificus (strain CMCP6).